The sequence spans 654 residues: Beta-galactosidase-1-like protein (654 aa).

An N-terminal signal peptide occupies residues 1–27 (MAPKKPSCLRSLLLPLSLTLLLPQADT). A glycan (N-linked (GlcNAc...) asparagine) is linked at Asn97. Glu186 functions as the Proton donor in the catalytic mechanism. N-linked (GlcNAc...) asparagine glycosylation is present at Asn243. Catalysis depends on Glu264, which acts as the Nucleophile.

This sequence belongs to the glycosyl hydrolase 35 family.

The protein localises to the secreted. In terms of biological role, probable glycosyl hydrolase. This Macaca fascicularis (Crab-eating macaque) protein is Beta-galactosidase-1-like protein (GLB1L).